We begin with the raw amino-acid sequence, 462 residues long: UDP-N-acetylmuramate--L-alanine ligase (462 aa).

Residue 117-123 (GTHGKTT) coordinates ATP.

This sequence belongs to the MurCDEF family.

Its subcellular location is the cytoplasm. The catalysed reaction is UDP-N-acetyl-alpha-D-muramate + L-alanine + ATP = UDP-N-acetyl-alpha-D-muramoyl-L-alanine + ADP + phosphate + H(+). It participates in cell wall biogenesis; peptidoglycan biosynthesis. In terms of biological role, cell wall formation. This chain is UDP-N-acetylmuramate--L-alanine ligase, found in Streptomyces coelicolor (strain ATCC BAA-471 / A3(2) / M145).